We begin with the raw amino-acid sequence, 78 residues long: Excisionase (78 aa).

Functionally, excisionase and integrase are necessary for the excision of prophage from the host genome by site-specific recombination at the att site. The protein is Excisionase (xis) of Enterobacteria phage P21 (Bacteriophage 21).